A 579-amino-acid chain; its full sequence is Rhoptry surface protein CERLI2 (579 aa).

One can recognise a C2 domain in the interval 52–84; it reads LHNYRTFYLLIKINEIFNINKYKQIYIIVNTDK. Tandem repeats lie at residues 442–451, 452–461, 462–471, 472–481, 482–491, 492–501, 502–511, 522–531, 532–541, 542–551, and 552–561. The interval 442–561 is 12 X 10 AA tandem repeat of Q-T-E-I-[K/N]-N-D-[H/N/I][I/N]; the sequence is QTDEIKNDNI…QTDEIKNDIN (120 aa).

Its subcellular location is the cytoplasmic vesicle. The protein localises to the secretory vesicle. It localises to the rhoptry membrane. It is found in the cell membrane. The protein resides in the host cell membrane. Functionally, plays an important role in rhoptry physiology and thus is essential for merozoite invasion of host erythrocytes. In Plasmodium falciparum (isolate 3D7), this protein is Rhoptry surface protein CERLI2.